Here is a 476-residue protein sequence, read N- to C-terminus: Aspartyl/glutamyl-tRNA(Asn/Gln) amidotransferase subunit B (476 aa).

The protein belongs to the GatB/GatE family. GatB subfamily. Heterotrimer of A, B and C subunits.

It carries out the reaction L-glutamyl-tRNA(Gln) + L-glutamine + ATP + H2O = L-glutaminyl-tRNA(Gln) + L-glutamate + ADP + phosphate + H(+). The enzyme catalyses L-aspartyl-tRNA(Asn) + L-glutamine + ATP + H2O = L-asparaginyl-tRNA(Asn) + L-glutamate + ADP + phosphate + 2 H(+). Its function is as follows. Allows the formation of correctly charged Asn-tRNA(Asn) or Gln-tRNA(Gln) through the transamidation of misacylated Asp-tRNA(Asn) or Glu-tRNA(Gln) in organisms which lack either or both of asparaginyl-tRNA or glutaminyl-tRNA synthetases. The reaction takes place in the presence of glutamine and ATP through an activated phospho-Asp-tRNA(Asn) or phospho-Glu-tRNA(Gln). This is Aspartyl/glutamyl-tRNA(Asn/Gln) amidotransferase subunit B from Listeria welshimeri serovar 6b (strain ATCC 35897 / DSM 20650 / CCUG 15529 / CIP 8149 / NCTC 11857 / SLCC 5334 / V8).